A 250-amino-acid polypeptide reads, in one-letter code: Imidazole glycerol phosphate synthase subunit HisF (250 aa).

Active-site residues include aspartate 11 and aspartate 130.

This sequence belongs to the HisA/HisF family. As to quaternary structure, heterodimer of HisH and HisF.

It is found in the cytoplasm. It catalyses the reaction 5-[(5-phospho-1-deoxy-D-ribulos-1-ylimino)methylamino]-1-(5-phospho-beta-D-ribosyl)imidazole-4-carboxamide + L-glutamine = D-erythro-1-(imidazol-4-yl)glycerol 3-phosphate + 5-amino-1-(5-phospho-beta-D-ribosyl)imidazole-4-carboxamide + L-glutamate + H(+). It participates in amino-acid biosynthesis; L-histidine biosynthesis; L-histidine from 5-phospho-alpha-D-ribose 1-diphosphate: step 5/9. In terms of biological role, IGPS catalyzes the conversion of PRFAR and glutamine to IGP, AICAR and glutamate. The HisF subunit catalyzes the cyclization activity that produces IGP and AICAR from PRFAR using the ammonia provided by the HisH subunit. The sequence is that of Imidazole glycerol phosphate synthase subunit HisF from Bacteroides fragilis (strain ATCC 25285 / DSM 2151 / CCUG 4856 / JCM 11019 / LMG 10263 / NCTC 9343 / Onslow / VPI 2553 / EN-2).